The following is an 850-amino-acid chain: Vacuolar membrane protease (850 aa).

Residues 1 to 20 (MASSRAQWFNPIAFTPWPVT) are Cytoplasmic-facing. A helical transmembrane segment spans residues 21–41 (CITTIVYLALLIPILVINLVV). The Vacuolar segment spans residues 42 to 282 (PSAPETNPKG…DGKSKDQNKV (241 aa)). Residues Asn-53, Asn-116, and Asn-119 are each glycosylated (N-linked (GlcNAc...) asparagine). Residues His-175 and Asp-187 each contribute to the Zn(2+) site. Glu-221 functions as the Proton acceptor in the catalytic mechanism. Glu-222 provides a ligand contact to Zn(2+). The chain crosses the membrane as a helical span at residues 283-303 (NSGTGTLGVWFDMFGTAFAVF). Over 304–308 (RLHTL) the chain is Cytoplasmic. Residues 309 to 329 (FAISVALLVIAPLVIFVTSVI) form a helical membrane-spanning segment. The Vacuolar portion of the chain corresponds to 330–363 (LSKTDRMYLFSMSKSLEGTGDQVSLRGLRGFSRT). The chain crosses the membrane as a helical span at residues 364–384 (PIILVIATTIPICLAYLLEKV). The Cytoplasmic segment spans residues 385 to 393 (NPYIVHSSQ). A helical transmembrane segment spans residues 394–414 (FSVWSMMFSAWIFLAWFLACA). Over 415 to 425 (ADFFRPSALHR) the chain is Vacuolar. Residues 426–446 (AYSYTWIFIATWIMLVINTVY) traverse the membrane as a helical segment. The Cytoplasmic segment spans residues 447 to 529 (ANQKGIAAGP…TLPRWTWVLQ (83 aa)). The helical transmembrane segment at 530–550 (LLLLAPIVLILVGQLALFLTA) threads the bilayer. Topologically, residues 551–563 (SMCQVGSDGVSTF) are vacuolar. Residues 564–584 (VVYLACSVFTTLLCIPLFPLI) form a helical membrane-spanning segment. Topologically, residues 585 to 590 (HRFTYH) are cytoplasmic. The helical transmembrane segment at 591-611 (IPTFLFLVFIGTLIYNLVAFP) threads the bilayer. Over 612 to 850 (FSPANRLKTF…VEASHSFTIQ (239 aa)) the chain is Vacuolar. Asn-630, Asn-658, and Asn-702 each carry an N-linked (GlcNAc...) asparagine glycan.

It belongs to the peptidase M28 family. It depends on Zn(2+) as a cofactor.

The protein localises to the vacuole membrane. In terms of biological role, may be involved in vacuolar sorting and osmoregulation. This chain is Vacuolar membrane protease, found in Ajellomyces capsulatus (strain NAm1 / WU24) (Darling's disease fungus).